The primary structure comprises 1666 residues: Atrochrysone carboxylic acid synthase PKS4 (1666 aa).

One can recognise a Ketosynthase family 3 (KS3) domain in the interval 15–452 (FEPIAIVGIG…GNAGFMVIEE (438 aa)). Catalysis depends on for beta-ketoacyl synthase activity residues Cys194, His332, and His372. Residues 555–863 (AFCFSGQGGE…WMTALDALMR (309 aa)) form a malonyl-CoA:ACP transacylase (MAT) domain region. Ser632 functions as the For acyl/malonyl transferase activity in the catalytic mechanism. The tract at residues 905–1034 (REVKASSTML…EQDLLESLSL (130 aa)) is N-terminal hotdog fold. One can recognise a PKS/mFAS DH domain in the interval 905-1206 (REVKASSTML…MAKMKIYVLK (302 aa)). The product template (PT) domain stretch occupies residues 935–1203 (LLNHVMAGYT…DVRMAKMKIY (269 aa)). The interval 1050–1206 (STDVLRKELA…MAKMKIYVLK (157 aa)) is C-terminal hotdog fold. Ser1269 carries the O-(pantetheine 4'-phosphoryl)serine modification. Positions 1331 to 1395 (ATSPSLPIMP…TSTEPSQTLV (65 aa)) constitute a Carrier domain. Residues 1334-1397 (PSLPIMPNGV…TEPSQTLVAN (64 aa)) form a proline-rich linker region region. The alpha/beta hydrolase superfamily-type thioesterase (TE) domain stretch occupies residues 1444–1529 (TVIGIHCPGL…PPGVVGLTAQ (86 aa)).

It catalyses the reaction holo-[ACP] + 8 malonyl-CoA + 8 H(+) = atrochrysone carboxyl-[ACP] + 8 CO2 + 8 CoA + 2 H2O. Its pathway is secondary metabolite biosynthesis. Functionally, non-reducing polyketide synthase that synthesizes the universal anthraquinone precursor atrochrysone carboxylic acid from malonyl-CoA. Produces a mixture of both 3R and 3S enantiomers with an excess of the 3S form. PKS4 catalyzes both hepta- and octaketide synthesis and also yields 6-hydroxymusizin, probably via carboxylating activity inherent to the KS domain. This Calonarius odorifer (Mushroom) protein is Atrochrysone carboxylic acid synthase PKS4.